The chain runs to 525 residues: GMP synthase [glutamine-hydrolyzing] (525 aa).

A Glutamine amidotransferase type-1 domain is found at R9–L207. C86 functions as the Nucleophile in the catalytic mechanism. Residues H181 and E183 contribute to the active site. One can recognise a GMPS ATP-PPase domain in the interval W208–R400. ATP is bound at residue S235–S241.

In terms of assembly, homodimer.

The catalysed reaction is XMP + L-glutamine + ATP + H2O = GMP + L-glutamate + AMP + diphosphate + 2 H(+). It participates in purine metabolism; GMP biosynthesis; GMP from XMP (L-Gln route): step 1/1. Its function is as follows. Catalyzes the synthesis of GMP from XMP. This Yersinia pestis bv. Antiqua (strain Antiqua) protein is GMP synthase [glutamine-hydrolyzing].